A 408-amino-acid chain; its full sequence is Succinylornithine transaminase (408 aa).

Lys252 bears the N6-(pyridoxal phosphate)lysine mark.

It belongs to the class-III pyridoxal-phosphate-dependent aminotransferase family. AstC subfamily. It depends on pyridoxal 5'-phosphate as a cofactor.

It catalyses the reaction N(2)-succinyl-L-ornithine + 2-oxoglutarate = N-succinyl-L-glutamate 5-semialdehyde + L-glutamate. It participates in amino-acid degradation; L-arginine degradation via AST pathway; L-glutamate and succinate from L-arginine: step 3/5. Catalyzes the transamination of N(2)-succinylornithine and alpha-ketoglutarate into N(2)-succinylglutamate semialdehyde and glutamate. Can also act as an acetylornithine aminotransferase. This chain is Succinylornithine transaminase, found in Salmonella heidelberg (strain SL476).